Here is a 717-residue protein sequence, read N- to C-terminus: UvrABC system protein C (717 aa).

The GIY-YIG domain maps to Asp16–Val95. A UVR domain is found at Gly208 to Ala243. The tract at residues Glu467–Arg548 is disordered. Residues Glu477–Pro522 show a composition bias toward low complexity.

Belongs to the UvrC family. In terms of assembly, interacts with UvrB in an incision complex.

Its subcellular location is the cytoplasm. In terms of biological role, the UvrABC repair system catalyzes the recognition and processing of DNA lesions. UvrC both incises the 5' and 3' sides of the lesion. The N-terminal half is responsible for the 3' incision and the C-terminal half is responsible for the 5' incision. In Streptomyces griseus subsp. griseus (strain JCM 4626 / CBS 651.72 / NBRC 13350 / KCC S-0626 / ISP 5235), this protein is UvrABC system protein C.